A 416-amino-acid chain; its full sequence is Gamma-glutamyl phosphate reductase (416 aa).

It belongs to the gamma-glutamyl phosphate reductase family.

Its subcellular location is the cytoplasm. The enzyme catalyses L-glutamate 5-semialdehyde + phosphate + NADP(+) = L-glutamyl 5-phosphate + NADPH + H(+). Its pathway is amino-acid biosynthesis; L-proline biosynthesis; L-glutamate 5-semialdehyde from L-glutamate: step 2/2. Functionally, catalyzes the NADPH-dependent reduction of L-glutamate 5-phosphate into L-glutamate 5-semialdehyde and phosphate. The product spontaneously undergoes cyclization to form 1-pyrroline-5-carboxylate. This is Gamma-glutamyl phosphate reductase from Actinobacillus succinogenes (strain ATCC 55618 / DSM 22257 / CCUG 43843 / 130Z).